A 198-amino-acid polypeptide reads, in one-letter code: Recombination protein RecR (198 aa).

The C4-type zinc finger occupies 57–72; it reads CSICGNLTESDPCAIC. Residues 80–175 enclose the Toprim domain; it reads TTILVVEESK…KVTRLARGLA (96 aa).

It belongs to the RecR family.

Functionally, may play a role in DNA repair. It seems to be involved in an RecBC-independent recombinational process of DNA repair. It may act with RecF and RecO. The polypeptide is Recombination protein RecR (Lactococcus lactis subsp. cremoris (strain MG1363)).